The following is a 260-amino-acid chain: Neuraminyllactose-binding hemagglutinin (260 aa).

The signal sequence occupies residues 1–27 (MKANNHFKDFAWKKCLLGASVVALLVG). A lipid anchor (N-palmitoyl cysteine) is attached at C28. Residue C28 is the site of S-diacylglycerol cysteine attachment.

Its subcellular location is the cell outer membrane. The polypeptide is Neuraminyllactose-binding hemagglutinin (hpaA) (Helicobacter pylori (strain ATCC 700392 / 26695) (Campylobacter pylori)).